A 230-amino-acid chain; its full sequence is Large ribosomal subunit protein uL1 (230 aa).

The protein belongs to the universal ribosomal protein uL1 family. Part of the 50S ribosomal subunit.

Its function is as follows. Binds directly to 23S rRNA. The L1 stalk is quite mobile in the ribosome, and is involved in E site tRNA release. In terms of biological role, protein L1 is also a translational repressor protein, it controls the translation of the L11 operon by binding to its mRNA. This chain is Large ribosomal subunit protein uL1, found in Ruminiclostridium cellulolyticum (strain ATCC 35319 / DSM 5812 / JCM 6584 / H10) (Clostridium cellulolyticum).